We begin with the raw amino-acid sequence, 285 residues long: 2-dehydro-3-deoxyphosphooctonate aldolase (285 aa).

The protein belongs to the KdsA family.

The protein resides in the cytoplasm. It carries out the reaction D-arabinose 5-phosphate + phosphoenolpyruvate + H2O = 3-deoxy-alpha-D-manno-2-octulosonate-8-phosphate + phosphate. It functions in the pathway carbohydrate biosynthesis; 3-deoxy-D-manno-octulosonate biosynthesis; 3-deoxy-D-manno-octulosonate from D-ribulose 5-phosphate: step 2/3. The protein operates within bacterial outer membrane biogenesis; lipopolysaccharide biosynthesis. This chain is 2-dehydro-3-deoxyphosphooctonate aldolase, found in Albidiferax ferrireducens (strain ATCC BAA-621 / DSM 15236 / T118) (Rhodoferax ferrireducens).